The following is a 240-amino-acid chain: UDP-2,3-diacylglucosamine hydrolase (240 aa).

Residues Asp9, His11, Asp43, Asn81, and His116 each contribute to the Mn(2+) site. Residue Asn81–Arg82 coordinates substrate. Substrate contacts are provided by Asp124, Ser162, Lys166, Lys169, and His197. Mn(2+) is bound by residues His197 and His199.

It belongs to the LpxH family. Requires Mn(2+) as cofactor.

It is found in the cell inner membrane. It carries out the reaction UDP-2-N,3-O-bis[(3R)-3-hydroxytetradecanoyl]-alpha-D-glucosamine + H2O = 2-N,3-O-bis[(3R)-3-hydroxytetradecanoyl]-alpha-D-glucosaminyl 1-phosphate + UMP + 2 H(+). The protein operates within glycolipid biosynthesis; lipid IV(A) biosynthesis; lipid IV(A) from (3R)-3-hydroxytetradecanoyl-[acyl-carrier-protein] and UDP-N-acetyl-alpha-D-glucosamine: step 4/6. Its function is as follows. Hydrolyzes the pyrophosphate bond of UDP-2,3-diacylglucosamine to yield 2,3-diacylglucosamine 1-phosphate (lipid X) and UMP by catalyzing the attack of water at the alpha-P atom. Involved in the biosynthesis of lipid A, a phosphorylated glycolipid that anchors the lipopolysaccharide to the outer membrane of the cell. The sequence is that of UDP-2,3-diacylglucosamine hydrolase from Neisseria meningitidis serogroup B (strain ATCC BAA-335 / MC58).